The chain runs to 203 residues: Orotate phosphoribosyltransferase (203 aa).

Residues Arg-94, Lys-98, His-100, and 120 to 128 (EDLISTGGS) each bind 5-phospho-alpha-D-ribose 1-diphosphate. Ser-124 serves as a coordination point for orotate.

It belongs to the purine/pyrimidine phosphoribosyltransferase family. PyrE subfamily. As to quaternary structure, homodimer. Requires Mg(2+) as cofactor.

It catalyses the reaction orotidine 5'-phosphate + diphosphate = orotate + 5-phospho-alpha-D-ribose 1-diphosphate. It functions in the pathway pyrimidine metabolism; UMP biosynthesis via de novo pathway; UMP from orotate: step 1/2. Its function is as follows. Catalyzes the transfer of a ribosyl phosphate group from 5-phosphoribose 1-diphosphate to orotate, leading to the formation of orotidine monophosphate (OMP). The sequence is that of Orotate phosphoribosyltransferase from Staphylococcus aureus (strain Mu50 / ATCC 700699).